A 396-amino-acid chain; its full sequence is Subtilisin-like protease 5 (396 aa).

An N-terminal signal peptide occupies residues 1–20; that stretch reads MTGFLTILSLSLAALSVTNA. Positions 21 to 116 are excised as a propeptide; that stretch reads AQILSVPQGA…VEPDAIIKQH (96 aa). An Inhibitor I9 domain is found at 37–114; it reads YIVVMKDDTS…AFVEPDAIIK (78 aa). The region spanning 125–396 is the Peptidase S8 domain; that stretch reads PWGLSRLSNR…SRLLYNGSGR (272 aa). Active-site charge relay system residues include Asp156 and His187. Residues Asn230 and Asn248 are each glycosylated (N-linked (GlcNAc...) asparagine). The active-site Charge relay system is the Ser342. The tract at residues 376–396 is disordered; sequence PTIRNPGPDTTSRLLYNGSGR. An N-linked (GlcNAc...) asparagine glycan is attached at Asn392.

The protein belongs to the peptidase S8 family.

It localises to the secreted. Functionally, secreted subtilisin-like serine protease with keratinolytic activity that contributes to pathogenicity. This chain is Subtilisin-like protease 5 (SUB5), found in Arthroderma gypseum (strain ATCC MYA-4604 / CBS 118893) (Microsporum gypseum).